A 221-amino-acid chain; its full sequence is MNNNYPLFWINEILTNGFVEYILDIFSIMAFLTGIYVILTKNPIVSVLFLILLFGGISSYLNIIGLNFIGLSYIIVYIGAVSILFLFILMLINIRTSELQSNTSNSIPLTIFIGIIFSNFLFPMLPYDIVMLSNFYNNYFSEDFYTIDVNINDNNLNNLYNNVLYFMTSVIWDGSVIDFNHITAIGNIMYTIYNIWLIIASFILLLAMVGSIVITIKQRKI.

5 helical membrane-spanning segments follow: residues 18–38 (FVEY…IYVI), 44–64 (IVSV…LNII), 74–94 (IIVY…LINI), 107–127 (IPLT…MLPY), and 195–215 (IWLI…IVIT).

This sequence belongs to the complex I subunit 6 family.

Its subcellular location is the mitochondrion membrane. It catalyses the reaction a ubiquinone + NADH + 5 H(+)(in) = a ubiquinol + NAD(+) + 4 H(+)(out). In terms of biological role, core subunit of the mitochondrial membrane respiratory chain NADH dehydrogenase (Complex I) that is believed to belong to the minimal assembly required for catalysis. Complex I functions in the transfer of electrons from NADH to the respiratory chain. The immediate electron acceptor for the enzyme is believed to be ubiquinone. The sequence is that of NADH-ubiquinone oxidoreductase chain 6 (ND6) from Podospora anserina (strain S / ATCC MYA-4624 / DSM 980 / FGSC 10383) (Pleurage anserina).